A 448-amino-acid polypeptide reads, in one-letter code: Rhodopsin (448 aa).

Residues 2–33 (GRDLRDNETWWYNPSIVVHPHWREFDQVPDAV) are Extracellular-facing. N8 is a glycosylation site (N-linked (GlcNAc...) asparagine). The helical transmembrane segment at 34 to 58 (YYSLGIFIGICGIIGCGGNGIVIYL) threads the bilayer. The Cytoplasmic segment spans residues 59–70 (FTKTKSLQTPAN). A helical membrane pass occupies residues 71-97 (MFIINLAFSDFTFSLVNGFPLMTISCF). Over 98 to 109 (LKKWIFGFAACK) the chain is Extracellular. A disulfide bond links C108 and C186. A helical membrane pass occupies residues 110–131 (VYGFIGGIFGFMSIMTMAMISI). Topologically, residues 132-151 (DRYNVIGRPMAASKKMSHRR) are cytoplasmic. A helical membrane pass occupies residues 152–172 (AFIMIIFVWLWSVLWAIGPIF). Residues 173–199 (GWGAYTLEGVLCNCSFDYISRDSTTRS) are Extracellular-facing. Residues 200 to 224 (NILCMFILGFFGPILIIFFCYFNIV) form a helical membrane-spanning segment. The Cytoplasmic segment spans residues 225 to 261 (MSVSNHEKEMAAMAKRLNAKELRKAQAGANAEMRLAK). Residues 262 to 283 (ISIVIVSQFLLSWSPYAVVALL) traverse the membrane as a helical segment. Residues 284–293 (AQFGPLEWVT) are Extracellular-facing. The chain crosses the membrane as a helical span at residues 294-315 (PYAAQLPVMFAKASAIHNPMIY). K305 is modified (N6-(retinylidene)lysine). Residues 316–448 (SVSHPKFREA…QGVDNQAYQA (133 aa)) lie on the Cytoplasmic side of the membrane. S-palmitoyl cysteine attachment occurs at residues C336 and C337. A compositionally biased stretch (acidic residues) spans 343-352 (ETEDDKDAET). Residues 343–448 (ETEDDKDAET…QGVDNQAYQA (106 aa)) form a disordered region. Residues 359 to 391 (SSDAAPSADAAQMKEMMAMMQKMQQQQAAYPPQ) are compositionally biased toward low complexity. Residues 392 to 437 (GYAPPPQGYPPQGYPPQGYPPQGYPPQGYPPPPQGAPPQGAPPAAP) are compositionally biased toward pro residues.

It belongs to the G-protein coupled receptor 1 family. Opsin subfamily. Contains one covalently linked retinal chromophore. Upon light absorption, the covalently bound 11-cis-retinal is converted to all-trans-retinal. After hydrolysis of the Schiff base and release of the covalently bound all-trans-retinal, active rhodopsin is regenerated by binding of a fresh molecule of 11-cis-retinal. As to expression, retina, rhabdomere membrane of photoreceptor cells (at protein level).

Its subcellular location is the cell projection. It is found in the rhabdomere membrane. Functionally, photoreceptor required for image-forming vision at low light intensity. Light-induced isomerization of 11-cis to all-trans retinal triggers a conformational change that activates signaling via G-proteins. Signaling mediates the activation of phospholipase C. Subsequent receptor phosphorylation mediates displacement of the bound G-protein alpha subunit by arrestin and terminates signaling. This Todarodes pacificus (Japanese flying squid) protein is Rhodopsin (RHO).